Reading from the N-terminus, the 622-residue chain is Dopamine beta-hydroxylase (622 aa).

At 1 to 20 (MQAHLSHQPCWSSLPSPSVR) the chain is on the cytoplasmic side. A helical; Signal-anchor for type II membrane protein membrane pass occupies residues 21-41 (EAASMYGTAVAIFLVILVAAL). At 42-621 (RGSEPPESPF…TVPITTEADA (580 aa)) the chain is on the intragranular side. The DOMON domain occupies 61–177 (GILELSWNVS…DTVHLVYGIL (117 aa)). Residues Asn-68 and Asn-188 are each glycosylated (N-linked (GlcNAc...) asparagine). 6 disulfide bridges follow: Cys-158–Cys-600, Cys-236–Cys-287, Cys-273–Cys-299, Cys-394–Cys-507, Cys-398–Cys-569, and Cys-470–Cys-492. Residue Tyr-234 is part of the active site. Positions 266 and 267 each coordinate Cu(2+). His-337 is a Cu(2+) binding site. At Ser-350 the chain carries Phosphoserine; by CaMK. His-416 is an active-site residue. Positions 416 and 418 each coordinate Cu(2+). N-linked (GlcNAc...) asparagine glycosylation occurs at Asn-476. Met-491 serves as a coordination point for Cu(2+). N-linked (GlcNAc...) asparagine glycosylation occurs at Asn-570. The segment at 594–622 (EEPTPRCPIRQTQSPANPTVPITTEADAE) is disordered. Over residues 603-615 (RQTQSPANPTVPI) the composition is skewed to polar residues.

Belongs to the copper type II ascorbate-dependent monooxygenase family. In terms of assembly, homotetramer; composed of two disulfide-linked dimers. Cu(2+) serves as cofactor. Post-translationally, proteolytic cleavage after the membrane-anchor leads to the release of the soluble form. In terms of processing, N-glycosylated. In terms of tissue distribution, detected in adrenal gland secretory granules (at protein level). Detected in adrenal gland.

The protein localises to the cytoplasmic vesicle. The protein resides in the secretory vesicle lumen. It localises to the secretory vesicle. Its subcellular location is the chromaffin granule lumen. It is found in the secretory vesicle membrane. The protein localises to the chromaffin granule membrane. The enzyme catalyses dopamine + 2 L-ascorbate + O2 = (R)-noradrenaline + 2 monodehydro-L-ascorbate radical + H2O. It participates in catecholamine biosynthesis; (R)-noradrenaline biosynthesis; (R)-noradrenaline from dopamine: step 1/1. Functionally, catalyzes the hydroxylation of dopamine to noradrenaline (also known as norepinephrine), and is thus vital for regulation of these neurotransmitters. This Mus musculus (Mouse) protein is Dopamine beta-hydroxylase (Dbh).